Reading from the N-terminus, the 222-residue chain is C-8 sterol isomerase ERG2 (222 aa).

Residues F3–T23 traverse the membrane as a helical segment.

Belongs to the ERG2 family.

The protein localises to the endoplasmic reticulum membrane. The catalysed reaction is fecosterol = episterol. It functions in the pathway steroid metabolism; ergosterol biosynthesis; ergosterol from zymosterol: step 2/5. Its activity is regulated as follows. Catalytic activity is inhibited by the morphilines tridemorph, fenpropimorph, and fenpropidin. Functionally, C-8 sterol isomerase; part of the third module of ergosterol biosynthesis pathway that includes the late steps of the pathway. ERG2 catalyzes the reaction which results in unsaturation at C-7 in the B ring of sterols and thus converts fecosterol to episterol. The third module or late pathway involves the ergosterol synthesis itself through consecutive reactions that mainly occur in the endoplasmic reticulum (ER) membrane. Firstly, the squalene synthase ERG9 catalyzes the condensation of 2 farnesyl pyrophosphate moieties to form squalene, which is the precursor of all steroids. Squalene synthase is crucial for balancing the incorporation of farnesyl diphosphate (FPP) into sterol and nonsterol isoprene synthesis. Secondly, the squalene epoxidase ERG1 catalyzes the stereospecific oxidation of squalene to (S)-2,3-epoxysqualene, which is considered to be a rate-limiting enzyme in steroid biosynthesis. Then, the lanosterol synthase ERG7 catalyzes the cyclization of (S)-2,3 oxidosqualene to lanosterol, a reaction that forms the sterol core. In the next steps, lanosterol is transformed to zymosterol through a complex process involving various demethylation, reduction and desaturation reactions. The lanosterol 14-alpha-demethylase ERG11 (also known as CYP51) catalyzes C14-demethylation of lanosterol to produce 4,4'-dimethyl cholesta-8,14,24-triene-3-beta-ol, which is critical for ergosterol biosynthesis. The C-14 reductase ERG24 reduces the C14=C15 double bond of 4,4-dimethyl-cholesta-8,14,24-trienol to produce 4,4-dimethyl-cholesta-8,24-dienol. 4,4-dimethyl-cholesta-8,24-dienol is substrate of the C-4 demethylation complex ERG25-ERG26-ERG27 in which ERG25 catalyzes the three-step monooxygenation required for the demethylation of 4,4-dimethyl and 4alpha-methylsterols, ERG26 catalyzes the oxidative decarboxylation that results in a reduction of the 3-beta-hydroxy group at the C-3 carbon to an oxo group, and ERG27 is responsible for the reduction of the keto group on the C-3. ERG28 has a role as a scaffold to help anchor ERG25, ERG26 and ERG27 to the endoplasmic reticulum and ERG29 regulates the activity of the iron-containing C4-methylsterol oxidase ERG25. Then, the sterol 24-C-methyltransferase ERG6 catalyzes the methyl transfer from S-adenosyl-methionine to the C-24 of zymosterol to form fecosterol. The C-8 sterol isomerase ERG2 catalyzes the reaction which results in unsaturation at C-7 in the B ring of sterols and thus converts fecosterol to episterol. The sterol-C5-desaturase ERG3 then catalyzes the introduction of a C-5 double bond in the B ring to produce 5-dehydroepisterol. The C-22 sterol desaturase ERG5 further converts 5-dehydroepisterol into ergosta-5,7,22,24(28)-tetraen-3beta-ol by forming the C-22(23) double bond in the sterol side chain. Finally, ergosta-5,7,22,24(28)-tetraen-3beta-ol is substrate of the C-24(28) sterol reductase ERG4 to produce ergosterol. The chain is C-8 sterol isomerase ERG2 from Saccharomyces cerevisiae (strain ATCC 204508 / S288c) (Baker's yeast).